Here is a 578-residue protein sequence, read N- to C-terminus: MSAPRAEEQPSRSGERQPLVARGPRGPRRWRRTAAAAVLLVQMLERAAFFGVTSNLVLYLNSLNFNWDGQQASRATLLFLGASYLLAPVGGWLADVYLGRFLTISLSLLLYLAASGLLLTTITNDGRRSFCGEMPELPLEPACPSSSCQGSWSSPYCATTLYLVLLLLALAASSVRSTLTSFGADQVMDLGRDATRRFFNWFYWSINLGAILSLLVVAFIEQNISFLWGYSIIVGLVGLAFFIFLFATPVFITKPPTGSQVSSMLKLAFQNCCPCRRSSSRDSESAHLLPDQRSNQPGPSPQEDMANFQVLVKILPVMVTLVPYWMVYFQMQSTYVLQGLHLHIPNIFRTNPNISLLLRSDSSNYRIPEAWLLLANVAVILILIPVKDHLIDPLLLRCKLLPSSLQKMALGMFFGFTSIIVAGVLEKERLQYIAANQTVPQLIGKDLYYAAPLSIWWQIPQYLLIGVSEIFASIPGLEFAYSEAPRSMQGAIMGIFFCLSGVGSLLGSGLVALLSFPGGWMYCPKDFGNINNCQMDRYFFLLAGIEAVTAVLFLWIAGRYERTRQDPASQRSSSRVRG.

Residues methionine 1 to glutamate 15 are compositionally biased toward basic and acidic residues. The disordered stretch occupies residues methionine 1–proline 27. 5 helical membrane passes run threonine 33–threonine 53, leucine 77–tyrosine 97, leucine 102–isoleucine 122, proline 155–valine 175, and tryptophan 201–glutamate 221. Residue asparagine 223 is glycosylated (N-linked (GlcNAc...) asparagine). The chain crosses the membrane as a helical span at residues isoleucine 232 to isoleucine 252. The segment at serine 280–proline 301 is disordered. Residues phenylalanine 308–tyrosine 328 traverse the membrane as a helical segment. Asparagine 353 carries N-linked (GlcNAc...) asparagine glycosylation. The next 2 helical transmembrane spans lie at isoleucine 367–lysine 387 and leucine 405–leucine 425. The N-linked (GlcNAc...) asparagine glycan is linked to asparagine 436. 3 consecutive transmembrane segments (helical) span residues tyrosine 462–tyrosine 481, glycine 494–leucine 514, and tyrosine 538–glycine 558.

It belongs to the major facilitator superfamily. Proton-dependent oligopeptide transporter (POT/PTR) (TC 2.A.17) family. Expressed highly in bone marrow derived macrophages, and weakly in spleen and lung. Expressed in plasmacytoid dendritic cells (pDCs) in response to toll-like receptors (TLR) stimulation.

Its subcellular location is the lysosome membrane. The protein localises to the endosome membrane. It carries out the reaction N-acetyl-D-muramoyl-L-alanyl-D-isoglutamine(out) + n H(+)(out) = N-acetyl-D-muramoyl-L-alanyl-D-isoglutamine(in) + n H(+)(in). It catalyses the reaction glycylglycylglycine(out) + n H(+)(out) = glycylglycylglycine(in) + n H(+)(in). The enzyme catalyses carnosine(out) + n H(+)(out) = carnosine(in) + n H(+)(in). The catalysed reaction is L-histidine(out) + n H(+)(out) = L-histidine(in) + n H(+)(in). In terms of biological role, proton-coupled amino-acid transporter that transports free histidine and certain di- and tripeptides, and is involved in innate immune response. Also able to transport carnosine. Involved in the detection of microbial pathogens by toll-like receptors (TLRs) and NOD-like receptors (NLRs), probably by mediating transport of bacterial peptidoglycans across the endolysosomal membrane: catalyzes the transport of certain bacterial peptidoglycans, such as muramyl dipeptide (MDP), the NOD2 ligand. The protein is Solute carrier family 15 member 3 of Mus musculus (Mouse).